We begin with the raw amino-acid sequence, 176 residues long: Ribosome maturation factor RimM (176 aa).

In terms of domain architecture, PRC barrel spans 97 to 176 (DNDFYHRDLI…QIVVDWDPDF (80 aa)).

Belongs to the RimM family. As to quaternary structure, binds ribosomal protein uS19.

It localises to the cytoplasm. An accessory protein needed during the final step in the assembly of 30S ribosomal subunit, possibly for assembly of the head region. Essential for efficient processing of 16S rRNA. May be needed both before and after RbfA during the maturation of 16S rRNA. It has affinity for free ribosomal 30S subunits but not for 70S ribosomes. This Shewanella denitrificans (strain OS217 / ATCC BAA-1090 / DSM 15013) protein is Ribosome maturation factor RimM.